The primary structure comprises 188 residues: MSVLPTPLANQLLIALPALSDPTFSRSVALICQHDENGAMGVLVNRPSEYTLGEVLSQMGIDTSDERLREQPVLSGGPVHPERGFVIHDDARAWDSSLEVGQGVYLTTSRDILEAMAAGDGPRNALVALGCAGWGAGQLEFELGENSWLTAPSDANVLFDTALEDRWQTAAGRIGVDLFRLTDYSGHA.

This sequence belongs to the UPF0301 (AlgH) family.

The protein is UPF0301 protein XC_1365 of Xanthomonas campestris pv. campestris (strain 8004).